The chain runs to 510 residues: DNA nucleotidylexotransferase (510 aa).

The disordered stretch occupies residues 1 to 22 (MDPLQAVHLGPRKKRPRQLGTP). The short motif at 11–17 (PRKKRPR) is the Nuclear localization signal element. The BRCT domain maps to 27 to 124 (PYDIRFRDLV…KPVEMMGRHQ (98 aa)). S134 carries the post-translational modification Phosphoserine. Positions 151 to 510 (SQYACQRRTT…DYIEPWERNA (360 aa)) are mediates interaction with DNTTIP2. The segment at 258-262 (VGLKT) is involved in DNA binding. Residues 333–338 (GFRRGK) and 342–345 (HDVD) each bind a 2'-deoxyribonucleoside 5'-triphosphate. Mg(2+) contacts are provided by D343, D345, and D434. Residue 449–450 (GW) participates in a 2'-deoxyribonucleoside 5'-triphosphate binding.

It belongs to the DNA polymerase type-X family. In terms of assembly, interacts with PRP19 and DNTTIP1. Forms a ternary complex with DNTTIP2 and core histone. Released from this complex by PCNA. Interacts with TRERF1. Mg(2+) is required as a cofactor. As to expression, isoform TDT-L: Expressed in the thymus, and, at lower levels, in the bone marrow. Detected in both cycling and noncycling pro-B and pre-B cells (at protein level). Isoform TDT-S: Expressed in both cycling and noncycling pro-B, but not pre-B, cells (at protein level). Not detected in mature peripheral or germinal center B cells.

It localises to the nucleus. Its subcellular location is the cytoplasm. It catalyses the reaction DNA(n) + a 2'-deoxyribonucleoside 5'-triphosphate = DNA(n+1) + diphosphate. In terms of biological role, transferase that catalyzes the nontemplated addition of nucleoside triphosphate to coding ends during V(D)J recombination (N addition). Involved in the generation of diversity in the antigen-binding region of immunoglobulin heavy and light chains and T-cell receptors during B- and T-cell development. Does not act on double-stranded DNA with blunt ends. 3'-to-5' DNA exonuclease. Involved in the generation of diversity in the antigen-binding region of immunoglobulin heavy and light chains and T-cell receptors during B- and T-cell development. Acts on single-stranded and double-stranded DNA with 3' or 5' extensions, but not on double-stranded DNA with blunt ends. Attenuates not only isoform TDT-S-catalyzed N addition, but also P (palindromic) addition in coding joins. Lacks terminal transferase activity. The polypeptide is DNA nucleotidylexotransferase (Dntt) (Mus musculus (Mouse)).